The primary structure comprises 363 residues: Chorismate synthase (363 aa).

Arg-48 and Arg-54 together coordinate NADP(+). Residues Arg-125 to Ser-127, Asn-238 to Ala-239, Gly-278, Lys-293 to Ser-297, and Arg-319 each bind FMN.

Belongs to the chorismate synthase family. In terms of assembly, homotetramer. The cofactor is FMNH2.

The catalysed reaction is 5-O-(1-carboxyvinyl)-3-phosphoshikimate = chorismate + phosphate. It functions in the pathway metabolic intermediate biosynthesis; chorismate biosynthesis; chorismate from D-erythrose 4-phosphate and phosphoenolpyruvate: step 7/7. Functionally, catalyzes the anti-1,4-elimination of the C-3 phosphate and the C-6 proR hydrogen from 5-enolpyruvylshikimate-3-phosphate (EPSP) to yield chorismate, which is the branch point compound that serves as the starting substrate for the three terminal pathways of aromatic amino acid biosynthesis. This reaction introduces a second double bond into the aromatic ring system. The protein is Chorismate synthase of Alcanivorax borkumensis (strain ATCC 700651 / DSM 11573 / NCIMB 13689 / SK2).